Here is a 193-residue protein sequence, read N- to C-terminus: Thioredoxin peroxidase (193 aa).

A Thioredoxin domain is found at A3 to F161. The active-site Cysteine sulfenic acid (-SOH) intermediate is the C48.

It belongs to the peroxiredoxin family. AhpC/Prx1 subfamily. As to quaternary structure, homodimer; disulfide-linked, upon oxidation.

The enzyme catalyses a hydroperoxide + [thioredoxin]-dithiol = an alcohol + [thioredoxin]-disulfide + H2O. In terms of biological role, thiol-specific peroxidase that catalyzes the reduction of hydrogen peroxide and organic hydroperoxides to water and alcohols, respectively. Plays a role in cell protection against oxidative stress by detoxifying peroxides and as sensor of hydrogen peroxide-mediated signaling events. This Echinococcus granulosus (Hydatid tapeworm) protein is Thioredoxin peroxidase (TPX).